A 292-amino-acid polypeptide reads, in one-letter code: Acetylglutamate kinase (292 aa).

Substrate-binding positions include 64-65 (GG), R86, and N190.

This sequence belongs to the acetylglutamate kinase family. ArgB subfamily.

It is found in the cytoplasm. The enzyme catalyses N-acetyl-L-glutamate + ATP = N-acetyl-L-glutamyl 5-phosphate + ADP. It functions in the pathway amino-acid biosynthesis; L-arginine biosynthesis; N(2)-acetyl-L-ornithine from L-glutamate: step 2/4. Catalyzes the ATP-dependent phosphorylation of N-acetyl-L-glutamate. This chain is Acetylglutamate kinase, found in Citrifermentans bemidjiense (strain ATCC BAA-1014 / DSM 16622 / JCM 12645 / Bem) (Geobacter bemidjiensis).